Reading from the N-terminus, the 236-residue chain is Small ribosomal subunit protein eS6 (236 aa).

Phosphoserine occurs at positions 232 and 233.

This sequence belongs to the eukaryotic ribosomal protein eS6 family. Post-translationally, phosphorylated.

The sequence is that of Small ribosomal subunit protein eS6 (RPS6) from Debaryomyces hansenii (strain ATCC 36239 / CBS 767 / BCRC 21394 / JCM 1990 / NBRC 0083 / IGC 2968) (Yeast).